A 359-amino-acid polypeptide reads, in one-letter code: F-box protein At1g10895 (359 aa).

Residues 2 to 48 enclose the F-box domain; that stretch reads TTMSDLDEIMVAEILCRTPMTCLKTVRSVCKKWNALSKKWFFFGKAK.

This is F-box protein At1g10895 from Arabidopsis thaliana (Mouse-ear cress).